A 274-amino-acid polypeptide reads, in one-letter code: 2,3,4,5-tetrahydropyridine-2,6-dicarboxylate N-succinyltransferase (274 aa).

2 residues coordinate substrate: arginine 104 and aspartate 141.

The protein belongs to the transferase hexapeptide repeat family. As to quaternary structure, homotrimer.

Its subcellular location is the cytoplasm. The catalysed reaction is (S)-2,3,4,5-tetrahydrodipicolinate + succinyl-CoA + H2O = (S)-2-succinylamino-6-oxoheptanedioate + CoA. The protein operates within amino-acid biosynthesis; L-lysine biosynthesis via DAP pathway; LL-2,6-diaminopimelate from (S)-tetrahydrodipicolinate (succinylase route): step 1/3. In Buchnera aphidicola subsp. Baizongia pistaciae (strain Bp), this protein is 2,3,4,5-tetrahydropyridine-2,6-dicarboxylate N-succinyltransferase.